A 1502-amino-acid chain; its full sequence is DNA-directed RNA polymerase subunit beta' (1502 aa).

4 residues coordinate Zn(2+): Cys60, Cys62, Cys75, and Cys78. Residues 265–293 form a disordered region; the sequence is RKQRDLEDAEQLTGAERERKEYEASQERE. Over residues 279–293 the composition is skewed to basic and acidic residues; it reads AERERKEYEASQERE. Mg(2+)-binding residues include Asp626, Asp628, and Asp630. The Zn(2+) site is built by Cys1002, Cys1075, Cys1082, and Cys1085. The interval 1472–1502 is disordered; sequence SDDNGDEVGKNGEFADETPFTGDSDDRDNEI.

This sequence belongs to the RNA polymerase beta' chain family. As to quaternary structure, the RNAP catalytic core consists of 2 alpha, 1 beta, 1 beta' and 1 omega subunit. When a sigma factor is associated with the core the holoenzyme is formed, which can initiate transcription. Requires Mg(2+) as cofactor. Zn(2+) is required as a cofactor.

The enzyme catalyses RNA(n) + a ribonucleoside 5'-triphosphate = RNA(n+1) + diphosphate. Functionally, DNA-dependent RNA polymerase catalyzes the transcription of DNA into RNA using the four ribonucleoside triphosphates as substrates. This Roseiflexus castenholzii (strain DSM 13941 / HLO8) protein is DNA-directed RNA polymerase subunit beta'.